A 175-amino-acid polypeptide reads, in one-letter code: DDTNAPLCLCDEPGILGRKEFVSDATKTIIEKAVEEVAKEGGVSGRGFSLFSHHPVFRECGKYECRTVRPEHSRCYNFPPFIHFKSECPVSTRDCEPVFGYTAAGEFRVIVQAPRAGFRQCVWQHKCRYGSNNCGFNGRCTQQRSVVRLVTFNLEKNGFLCETFRTCCGCPCRSF.

8 disulfide bridges follow: C8/C167, C10/C95, C60/C161, C65/C121, C75/C168, C88/C140, C127/C170, and C134/C172.

The protein belongs to the coagulin family. As to quaternary structure, coagulogen is cleaved after Arg-18 and Arg-46 by a clotting enzyme contained in the hemocyte and activated by a bacterial endotoxin (lipopolysaccharide). This cleavage releases the peptide C and leaves 2 chains of coagulin, A and B, linked by two disulfide bonds. Coagulin molecules interlink to form a gel. Hemolymph.

It localises to the secreted. Functionally, coagulogen is a gel-forming protein of hemolymph; it hinders the spread of invaders by immobilizing them. The polypeptide is Coagulogen (Tachypleus gigas (Southeast Asian horseshoe crab)).